Reading from the N-terminus, the 121-residue chain is Flagellar protein FliT (121 aa).

The interval Met-1 to Leu-50 is required for homodimerization. The interval Met-60–Val-98 is fliD binding.

It belongs to the FliT family. In terms of assembly, homodimer. Interacts with FliD and FlhC.

It is found in the cytoplasm. The protein resides in the cytosol. Dual-function protein that regulates the transcription of class 2 flagellar operons and that also acts as an export chaperone for the filament-capping protein FliD. As a transcriptional regulator, acts as an anti-FlhDC factor; it directly binds FlhC, thus inhibiting the binding of the FlhC/FlhD complex to class 2 promoters, resulting in decreased expression of class 2 flagellar operons. As a chaperone, effects FliD transition to the membrane by preventing its premature polymerization, and by directing it to the export apparatus. This chain is Flagellar protein FliT, found in Escherichia coli O9:H4 (strain HS).